The primary structure comprises 495 residues: Keratin, type II cuticular 87 (495 aa).

The interval 1–111 (MSCFSSRLGA…PNAQCVKHEE (111 aa)) is head. One can recognise an IF rod domain in the interval 111–422 (EKEQIKCLNS…RLLEGEEQRL (312 aa)). Residues 112 to 146 (KEQIKCLNSKFAAFIDKVRFLEQQNKLLETKWQFY) form a coil 1A region. The interval 147 to 156 (QNRKCCESNM) is linker 1. The interval 157 to 257 (EPLFEGYIEA…YEEETRLLHS (101 aa)) is coil 1B. The tract at residues 258 to 274 (HISDTSVVVKMDNSRDL) is linker 12. The coil 2 stretch occupies residues 275–418 (NMDCVVAEIK…ITYRRLLEGE (144 aa)). A tail region spans residues 419 to 494 (EQRLCEGVGS…TCGSSRSVRF (76 aa)).

It belongs to the intermediate filament family. As to quaternary structure, heterotetramer of two type I and two type II keratins.

In Mus musculus (Mouse), this protein is Keratin, type II cuticular 87.